The primary structure comprises 122 residues: MIIKRSRKELRKIRHLRIRKKIIGTSERPRLAVYKSLRYIYAQIIDDTKGHTLVSASSLEKEIRSQLKSTKNIEAAKLVGEVIAKRALEKGIKKVVFDRGGFLYHGKVKALADSARAAGLEF.

It belongs to the universal ribosomal protein uL18 family. As to quaternary structure, part of the 50S ribosomal subunit; part of the 5S rRNA/L5/L18/L25 subcomplex. Contacts the 5S and 23S rRNAs.

Functionally, this is one of the proteins that bind and probably mediate the attachment of the 5S RNA into the large ribosomal subunit, where it forms part of the central protuberance. The chain is Large ribosomal subunit protein uL18 from Dictyoglomus thermophilum (strain ATCC 35947 / DSM 3960 / H-6-12).